The following is a 711-amino-acid chain: Polyribonucleotide nucleotidyltransferase (711 aa).

The Mg(2+) site is built by aspartate 490 and aspartate 496. One can recognise a KH domain in the interval proline 557–isoleucine 619. The region spanning glycine 629–lysine 699 is the S1 motif domain.

Belongs to the polyribonucleotide nucleotidyltransferase family. It depends on Mg(2+) as a cofactor.

Its subcellular location is the cytoplasm. It catalyses the reaction RNA(n+1) + phosphate = RNA(n) + a ribonucleoside 5'-diphosphate. Functionally, involved in mRNA degradation. Catalyzes the phosphorolysis of single-stranded polyribonucleotides processively in the 3'- to 5'-direction. The chain is Polyribonucleotide nucleotidyltransferase from Phocaeicola vulgatus (strain ATCC 8482 / DSM 1447 / JCM 5826 / CCUG 4940 / NBRC 14291 / NCTC 11154) (Bacteroides vulgatus).